The primary structure comprises 424 residues: Lipoamide acyltransferase component of branched-chain alpha-keto acid dehydrogenase complex (424 aa).

One can recognise a Lipoyl-binding domain in the interval 3-78 (IEQMTMPQLG…QVGEMICKIE (76 aa)). K44 bears the N6-lipoyllysine mark. The interval 82–115 (ANPAEQKQEQPAASEAAENPVAKSAGAADQPNKK) is disordered. In terms of domain architecture, Peripheral subunit-binding (PSBD) spans 116–153 (RYSPAVLRLAGEHGIDLDQVTGTGAGGRITRKDIQRLI). The interval 154–193 (ETGGVQEQNPEELKTAAPAPKSASKPEPKEETSYPASAAG) is disordered. Residues H395 and D399 contribute to the active site.

This sequence belongs to the 2-oxoacid dehydrogenase family. Forms a 24-polypeptide structural core with octahedral symmetry. Requires (R)-lipoate as cofactor.

The enzyme catalyses N(6)-[(R)-dihydrolipoyl]-L-lysyl-[protein] + 2-methylpropanoyl-CoA = N(6)-[(R)-S(8)-2-methylpropanoyldihydrolipoyl]-L-lysyl-[protein] + CoA. Functionally, the branched-chain alpha-keto dehydrogenase complex catalyzes the overall conversion of alpha-keto acids to acyl-CoA and CO(2). It contains multiple copies of three enzymatic components: branched-chain alpha-keto acid decarboxylase (E1), lipoamide acyltransferase (E2) and lipoamide dehydrogenase (E3). This chain is Lipoamide acyltransferase component of branched-chain alpha-keto acid dehydrogenase complex (bfmBB), found in Bacillus subtilis (strain 168).